The sequence spans 321 residues: D-alanine--D-alanine ligase (321 aa).

Positions 121 to 315 (RSWFLTNNIN…FTNLIEEIIK (195 aa)) constitute an ATP-grasp domain. 147-199 (PVKRPYVIKPLTQGSSIGVEVIFEEDDFNFADYNFPYGYQVIIEQYIKGRELQ) contributes to the ATP binding site. Residues Glu-268, Glu-282, and Asn-284 each coordinate Mg(2+).

This sequence belongs to the D-alanine--D-alanine ligase family. It depends on Mg(2+) as a cofactor. The cofactor is Mn(2+).

It localises to the cytoplasm. It catalyses the reaction 2 D-alanine + ATP = D-alanyl-D-alanine + ADP + phosphate + H(+). Its pathway is cell wall biogenesis; peptidoglycan biosynthesis. Functionally, cell wall formation. This is D-alanine--D-alanine ligase from Rickettsia felis (strain ATCC VR-1525 / URRWXCal2) (Rickettsia azadi).